The primary structure comprises 324 residues: MTLTKETRVTLNDGNMMPILGLGTYASPHVPKSLAEEAVKIAIDVGYRHIDCAFITGNEMHIGNGIRSKISDGTVKREDIFYTGKLWCTYFSPEMVRKGLERSLRDVGMDYLDLFLMHWPVSLKPSGASDPSDKDKPFIYDNVDLCATWEALEARKDAGLVRSLGVSNFNRRQLERILNKPGLKYKPVCNQVECHVYLNQNKLHSYCKSKDIVLVTYSVLGSHRDRNWVDLSLPVLLDDPILNKVAAKYNRTSAEIAMRFILQKGIVVLAKSFTPARIKQNLGVFEFELKPEDMKSLESLDRNLHYGPFREVKQHPEYPFHDEY.

At T2 the chain carries N-acetylthreonine. An NADP(+)-binding site is contributed by 218–281 (SVLGSHRDRN…SFTPARIKQN (64 aa)).

This sequence belongs to the aldo/keto reductase family. In terms of assembly, monomer.

The protein is Rho crystallin of Rana temporaria (European common frog).